Consider the following 235-residue polypeptide: MRPSNREHDQLRPVTITRNFTNYAEGSVLVEFGQTKVICNASIVEGVPRFLKGKNQGWITAEYGMLPRATHSRTEREASKGKQGGRTLEIQRLIGRSLRACIDLKVLGENTITLDCDVIQADGGTRTAAITGSCVAMRDAIHWMVQREKIKKMPAFNYVAAVSVGIYRGQPVLDLDYAEDVLAETDMNVVMNEQGHFIEVQGTAEDNSFNREQLNSMLSLAEIGIPQLIEIQKNA.

Phosphate-binding positions include Arg-86 and 124-126 (GTR).

This sequence belongs to the RNase PH family. In terms of assembly, homohexameric ring arranged as a trimer of dimers.

It carries out the reaction tRNA(n+1) + phosphate = tRNA(n) + a ribonucleoside 5'-diphosphate. Its function is as follows. Phosphorolytic 3'-5' exoribonuclease that plays an important role in tRNA 3'-end maturation. Removes nucleotide residues following the 3'-CCA terminus of tRNAs; can also add nucleotides to the ends of RNA molecules by using nucleoside diphosphates as substrates, but this may not be physiologically important. Probably plays a role in initiation of 16S rRNA degradation (leading to ribosome degradation) during starvation. This Legionella pneumophila (strain Paris) protein is Ribonuclease PH.